A 229-amino-acid chain; its full sequence is 5'-methylthioadenosine/S-adenosylhomocysteine nucleosidase (229 aa).

Glu-12 serves as the catalytic Proton acceptor. Residues Gly-78, Met-152, and 173–174 each bind substrate; that span reads ME. Asp-197 (proton donor) is an active-site residue.

This sequence belongs to the PNP/UDP phosphorylase family. MtnN subfamily.

It catalyses the reaction S-adenosyl-L-homocysteine + H2O = S-(5-deoxy-D-ribos-5-yl)-L-homocysteine + adenine. The enzyme catalyses S-methyl-5'-thioadenosine + H2O = 5-(methylsulfanyl)-D-ribose + adenine. It carries out the reaction 5'-deoxyadenosine + H2O = 5-deoxy-D-ribose + adenine. The protein operates within amino-acid biosynthesis; L-methionine biosynthesis via salvage pathway; S-methyl-5-thio-alpha-D-ribose 1-phosphate from S-methyl-5'-thioadenosine (hydrolase route): step 1/2. Functionally, catalyzes the irreversible cleavage of the glycosidic bond in both 5'-methylthioadenosine (MTA) and S-adenosylhomocysteine (SAH/AdoHcy) to adenine and the corresponding thioribose, 5'-methylthioribose and S-ribosylhomocysteine, respectively. Also cleaves 5'-deoxyadenosine, a toxic by-product of radical S-adenosylmethionine (SAM) enzymes, into 5-deoxyribose and adenine. This Oceanobacillus iheyensis (strain DSM 14371 / CIP 107618 / JCM 11309 / KCTC 3954 / HTE831) protein is 5'-methylthioadenosine/S-adenosylhomocysteine nucleosidase.